The primary structure comprises 123 residues: Methicillin resistance regulatory protein MecI (123 aa).

A DNA-binding region (H-T-H motif) is located at residues 7–71; the sequence is EISSAEWEFM…KDNKIFQYYS (65 aa). The interval 74-123 is important for dimerization; sequence EESDIKYKTSKNFINKVYKGGFNSLVLNFVEKEDLSQDEIEELRNILNKK.

This sequence belongs to the BlaI transcriptional regulatory family. Monomer and homodimer. Upon exposure to beta-lactams, proteolytic cleavage at a single site impairs dimerization and abolishes repressor activity.

The protein localises to the cytoplasm. Its function is as follows. Transcriptional repressor that constitutively blocks the transcription of the gene for the penicillin-binding protein MecA. Binds DNA as a dimer. The protein is Methicillin resistance regulatory protein MecI (mecI) of Staphylococcus aureus (strain Mu50 / ATCC 700699).